The following is a 103-amino-acid chain: Nucleoid-associated protein Cgl0243/cg0297 (103 aa).

The protein belongs to the YbaB/EbfC family. As to quaternary structure, homodimer.

It localises to the cytoplasm. The protein resides in the nucleoid. Functionally, binds to DNA and alters its conformation. May be involved in regulation of gene expression, nucleoid organization and DNA protection. The protein is Nucleoid-associated protein Cgl0243/cg0297 of Corynebacterium glutamicum (strain ATCC 13032 / DSM 20300 / JCM 1318 / BCRC 11384 / CCUG 27702 / LMG 3730 / NBRC 12168 / NCIMB 10025 / NRRL B-2784 / 534).